A 578-amino-acid chain; its full sequence is DNA mismatch repair protein MutL (578 aa).

This sequence belongs to the DNA mismatch repair MutL/HexB family.

This protein is involved in the repair of mismatches in DNA. It is required for dam-dependent methyl-directed DNA mismatch repair. May act as a 'molecular matchmaker', a protein that promotes the formation of a stable complex between two or more DNA-binding proteins in an ATP-dependent manner without itself being part of a final effector complex. The protein is DNA mismatch repair protein MutL of Carboxydothermus hydrogenoformans (strain ATCC BAA-161 / DSM 6008 / Z-2901).